Consider the following 196-residue polypeptide: Transmembrane protein 126A (196 aa).

Topologically, residues 1–34 (MENHKSNNTKENITIVDISRKINQLPEAERNLLE) are mitochondrial matrix. Residues 35–55 (HGSVYVGLNAALCGLIANSLF) form a helical membrane-spanning segment. The Mitochondrial intermembrane segment spans residues 56-57 (RR). The helical transmembrane segment at 58 to 78 (ILNVTKARIAAGLPMAWIPFL) threads the bilayer. Over 79–107 (TTDITYRCFVSFPLNTGDLDCETCTITRS) the chain is Mitochondrial matrix. The chain crosses the membrane as a helical span at residues 108–128 (GLIGLVIGGLYPVFLAIPVNG). The Mitochondrial intermembrane segment spans residues 129–159 (GLAARYQSALLPHKGNILSYWIRTSKPVFRK). Residues 160 to 176 (MLFPIMLQTMFSAYLGS) form a helical membrane-spanning segment. Topologically, residues 177-196 (EQYKLLIKALQLSEPGKEIH) are mitochondrial matrix.

The protein belongs to the TMEM126 family. As to quaternary structure, interacts with OXA1L; promoting cotranslational quality control in mitochondria.

The protein localises to the mitochondrion inner membrane. Its function is as follows. Protein required for the cotranslational protein quality control in the inner membrane of the mitochondria. Associates with newly synthesized polypeptides and may act as a chaperone that cooperates with OXA1L for the insertion of newly synthesized mitochondrial proteins into the inner membrane. Required for the assembly of the ND4 module of mitochondrial complex I. In Pongo abelii (Sumatran orangutan), this protein is Transmembrane protein 126A (TMEM126A).